The chain runs to 200 residues: Glycerol-3-phosphate acyltransferase (200 aa).

Transmembrane regions (helical) follow at residues 1–21 (MITVILIFSAYLLGSISFAVV), 51–71 (VAAAVTLLGDAGKGWVAVVVA), 84–104 (VIASAALAVFLGHLFPIFLAF), 116–136 (ILLGLNLWLGILAILTWIIVA), and 159–179 (FLLQKEMLTITVLIISILLIL).

This sequence belongs to the PlsY family. As to quaternary structure, probably interacts with PlsX.

It localises to the cell inner membrane. It carries out the reaction an acyl phosphate + sn-glycerol 3-phosphate = a 1-acyl-sn-glycero-3-phosphate + phosphate. The protein operates within lipid metabolism; phospholipid metabolism. In terms of biological role, catalyzes the transfer of an acyl group from acyl-phosphate (acyl-PO(4)) to glycerol-3-phosphate (G3P) to form lysophosphatidic acid (LPA). This enzyme utilizes acyl-phosphate as fatty acyl donor, but not acyl-CoA or acyl-ACP. The sequence is that of Glycerol-3-phosphate acyltransferase from Nitrosomonas eutropha (strain DSM 101675 / C91 / Nm57).